A 296-amino-acid chain; its full sequence is Diaminopimelate epimerase (296 aa).

The substrate site is built by Asn17, Gln49, and Asn69. The active-site Proton donor is Cys78. Residues 79–80, Asn171, Asn205, and 223–224 contribute to the substrate site; these read GN and ER. Cys232 (proton acceptor) is an active-site residue. 233–234 contacts substrate; the sequence is GT.

The protein belongs to the diaminopimelate epimerase family. In terms of assembly, homodimer.

The protein resides in the cytoplasm. It catalyses the reaction (2S,6S)-2,6-diaminopimelate = meso-2,6-diaminopimelate. It participates in amino-acid biosynthesis; L-lysine biosynthesis via DAP pathway; DL-2,6-diaminopimelate from LL-2,6-diaminopimelate: step 1/1. Catalyzes the stereoinversion of LL-2,6-diaminopimelate (L,L-DAP) to meso-diaminopimelate (meso-DAP), a precursor of L-lysine and an essential component of the bacterial peptidoglycan. The chain is Diaminopimelate epimerase from Methylorubrum populi (strain ATCC BAA-705 / NCIMB 13946 / BJ001) (Methylobacterium populi).